A 364-amino-acid polypeptide reads, in one-letter code: tRNA 2-selenouridine synthase (364 aa).

Residues leucine 14–tryptophan 137 enclose the Rhodanese domain. Cysteine 97 (S-selanylcysteine intermediate) is an active-site residue. Residue glycine 149 participates in (2E)-geranyl diphosphate binding.

This sequence belongs to the SelU family. As to quaternary structure, monomer.

The enzyme catalyses 5-methylaminomethyl-2-thiouridine(34) in tRNA + selenophosphate + (2E)-geranyl diphosphate + H2O + H(+) = 5-methylaminomethyl-2-selenouridine(34) in tRNA + (2E)-thiogeraniol + phosphate + diphosphate. It catalyses the reaction 5-methylaminomethyl-2-thiouridine(34) in tRNA + (2E)-geranyl diphosphate = 5-methylaminomethyl-S-(2E)-geranyl-thiouridine(34) in tRNA + diphosphate. The catalysed reaction is 5-methylaminomethyl-S-(2E)-geranyl-thiouridine(34) in tRNA + selenophosphate + H(+) = 5-methylaminomethyl-2-(Se-phospho)selenouridine(34) in tRNA + (2E)-thiogeraniol. It carries out the reaction 5-methylaminomethyl-2-(Se-phospho)selenouridine(34) in tRNA + H2O = 5-methylaminomethyl-2-selenouridine(34) in tRNA + phosphate. In terms of biological role, involved in the post-transcriptional modification of the uridine at the wobble position (U34) of tRNA(Lys), tRNA(Glu) and tRNA(Gln). Catalyzes the conversion of 2-thiouridine (S2U-RNA) to 2-selenouridine (Se2U-RNA). Acts in a two-step process involving geranylation of 2-thiouridine (S2U) to S-geranyl-2-thiouridine (geS2U) and subsequent selenation of the latter derivative to 2-selenouridine (Se2U) in the tRNA chain. In Salmonella typhimurium (strain LT2 / SGSC1412 / ATCC 700720), this protein is tRNA 2-selenouridine synthase.